The primary structure comprises 208 residues: Uracil phosphoribosyltransferase (208 aa).

Residues Arg-78, Arg-103, and 130–138 (DPMLATGGS) contribute to the 5-phospho-alpha-D-ribose 1-diphosphate site. Residues Ile-193 and 198–200 (GDA) contribute to the uracil site. Asp-199 is a binding site for 5-phospho-alpha-D-ribose 1-diphosphate.

Belongs to the UPRTase family. Mg(2+) serves as cofactor.

The catalysed reaction is UMP + diphosphate = 5-phospho-alpha-D-ribose 1-diphosphate + uracil. It functions in the pathway pyrimidine metabolism; UMP biosynthesis via salvage pathway; UMP from uracil: step 1/1. With respect to regulation, allosterically activated by GTP. Catalyzes the conversion of uracil and 5-phospho-alpha-D-ribose 1-diphosphate (PRPP) to UMP and diphosphate. The chain is Uracil phosphoribosyltransferase from Shewanella putrefaciens (strain CN-32 / ATCC BAA-453).